The following is a 257-amino-acid chain: Zinc import ATP-binding protein ZnuC (257 aa).

The region spanning 5–220 (VELQSVTVTF…PSYVALFGQQ (216 aa)) is the ABC transporter domain. 37–44 (GPNGAGKS) contacts ATP. The segment at 234–257 (HEHDLAGSPVGPCQHNKQHGHDNA) is disordered.

The protein belongs to the ABC transporter superfamily. Zinc importer (TC 3.A.1.15.5) family. As to quaternary structure, the complex is composed of two ATP-binding proteins (ZnuC), two transmembrane proteins (ZnuB) and a solute-binding protein (ZnuA).

Its subcellular location is the cell inner membrane. The catalysed reaction is Zn(2+)(out) + ATP(in) + H2O(in) = Zn(2+)(in) + ADP(in) + phosphate(in) + H(+)(in). Part of the ABC transporter complex ZnuABC involved in zinc import. Responsible for energy coupling to the transport system. This Photobacterium profundum (strain SS9) protein is Zinc import ATP-binding protein ZnuC.